Reading from the N-terminus, the 323-residue chain is Transcription factor LUX (323 aa).

Disordered stretches follow at residues 1–25 (MGEE…WEMG), 53–139 (ERSR…DLSG), and 267–298 (GYHH…ESNP). Residues 65–87 (SETTLSSLRGGSSGPNTSSSNNN) are compositionally biased toward low complexity. A DNA-binding region (myb-like GARP) is located at residues 139-200 (GKTLKRPRLV…HLQKYRLYLK (62 aa)).

In terms of assembly, interacts with ELF3 and forms a complex with ELF3 and ELF4.

The protein localises to the nucleus. Transcription factor that is essential for the generation of the circadian clock oscillation. Is necessary for activation of CCA1 and LHY expression. Is coregulated with TOC1 and seems to be repressed by CCA1 and LHY by direct binding of these proteins to the evening element in the LUX promoter. Directly regulates the expression of PRR9, a major component of the morning transcriptional feedback circuit, by binding specific sites on PRR9 promoter. Binds to its own promoter, inducing a negative auto-regulatory feedback loop within the core clock. Binds to ELF3 and associates with ELF4 in a diurnal complex which is required for the expression of the growth-promoting transcription factors PIF4 and PIF5 and subsequent hypocotyl growth in the early evening. The polypeptide is Transcription factor LUX (LUX) (Arabidopsis thaliana (Mouse-ear cress)).